Consider the following 548-residue polypeptide: Druantia protein DruB (548 aa).

It is found in the cytoplasm. Component of antiviral defense system Druantia type I, composed of DruA, DruB, DruC, DruD and DruE. Expression of Druantia in E.coli (strain MG1655) confers resistance to phage lambda, SECphi18, SECphi27 and T4. The sequence is that of Druantia protein DruB from Escherichia coli (strain UMEA 4076-1).